A 78-amino-acid polypeptide reads, in one-letter code: UPF0335 protein A1E_00570 (78 aa).

The protein belongs to the UPF0335 family.

The polypeptide is UPF0335 protein A1E_00570 (Rickettsia canadensis (strain McKiel)).